Here is a 348-residue protein sequence, read N- to C-terminus: D-alanine--D-alanine ligase (348 aa).

The ATP-grasp domain maps to 132 to 334 (KRVLESIGIP…YPDLIEELVT (203 aa)). 162 to 217 (LARLTFPIFVKPANMGSSVGISKAQTKVELRKAIQLALTYDSRVLIEQGVVAREIE) lines the ATP pocket. Mg(2+) contacts are provided by aspartate 288, glutamate 301, and asparagine 303.

Belongs to the D-alanine--D-alanine ligase family. It depends on Mg(2+) as a cofactor. The cofactor is Mn(2+).

The protein resides in the cytoplasm. The catalysed reaction is 2 D-alanine + ATP = D-alanyl-D-alanine + ADP + phosphate + H(+). Its pathway is cell wall biogenesis; peptidoglycan biosynthesis. Functionally, cell wall formation. The chain is D-alanine--D-alanine ligase from Streptococcus pyogenes serotype M18 (strain MGAS8232).